An 87-amino-acid chain; its full sequence is Small ribosomal subunit protein bS20 (87 aa).

Belongs to the bacterial ribosomal protein bS20 family.

Its function is as follows. Binds directly to 16S ribosomal RNA. This Corynebacterium jeikeium (strain K411) protein is Small ribosomal subunit protein bS20.